Consider the following 37-residue polypeptide: Large ribosomal subunit protein bL36 (37 aa).

It belongs to the bacterial ribosomal protein bL36 family.

This Geobacter metallireducens (strain ATCC 53774 / DSM 7210 / GS-15) protein is Large ribosomal subunit protein bL36.